A 327-amino-acid polypeptide reads, in one-letter code: Biotin synthase (327 aa).

The Radical SAM core domain maps to 49–282 (FNKEKIDLCS…NKVIRLCGGR (234 aa)). Cys-67, Cys-71, and Cys-74 together coordinate [4Fe-4S] cluster. Positions 110, 142, 201, and 277 each coordinate [2Fe-2S] cluster.

The protein belongs to the radical SAM superfamily. Biotin synthase family. As to quaternary structure, homodimer. [4Fe-4S] cluster serves as cofactor. [2Fe-2S] cluster is required as a cofactor.

The enzyme catalyses (4R,5S)-dethiobiotin + (sulfur carrier)-SH + 2 reduced [2Fe-2S]-[ferredoxin] + 2 S-adenosyl-L-methionine = (sulfur carrier)-H + biotin + 2 5'-deoxyadenosine + 2 L-methionine + 2 oxidized [2Fe-2S]-[ferredoxin]. The protein operates within cofactor biosynthesis; biotin biosynthesis; biotin from 7,8-diaminononanoate: step 2/2. Its function is as follows. Catalyzes the conversion of dethiobiotin (DTB) to biotin by the insertion of a sulfur atom into dethiobiotin via a radical-based mechanism. In Methanococcus maripaludis (strain DSM 14266 / JCM 13030 / NBRC 101832 / S2 / LL), this protein is Biotin synthase.